Reading from the N-terminus, the 872-residue chain is DNA mismatch repair protein MutS (872 aa).

622 to 629 lines the ATP pocket; the sequence is GPNMAGKS.

This sequence belongs to the DNA mismatch repair MutS family.

In terms of biological role, this protein is involved in the repair of mismatches in DNA. It is possible that it carries out the mismatch recognition step. This protein has a weak ATPase activity. In Geobacter metallireducens (strain ATCC 53774 / DSM 7210 / GS-15), this protein is DNA mismatch repair protein MutS.